The chain runs to 373 residues: Glutamate 5-kinase (373 aa).

Lysine 12 is a binding site for ATP. Substrate is bound by residues serine 52, aspartate 139, and asparagine 154. Residue 216–222 (TGGMVTK) participates in ATP binding. A PUA domain is found at 281 to 359 (RGNICIDDGA…DEINTVLAGN (79 aa)).

Belongs to the glutamate 5-kinase family.

Its subcellular location is the cytoplasm. It catalyses the reaction L-glutamate + ATP = L-glutamyl 5-phosphate + ADP. Its pathway is amino-acid biosynthesis; L-proline biosynthesis; L-glutamate 5-semialdehyde from L-glutamate: step 1/2. In terms of biological role, catalyzes the transfer of a phosphate group to glutamate to form L-glutamate 5-phosphate. This chain is Glutamate 5-kinase, found in Dehalococcoides mccartyi (strain ATCC BAA-2266 / KCTC 15142 / 195) (Dehalococcoides ethenogenes (strain 195)).